The primary structure comprises 716 residues: DNA replication licensing factor MCM7 (716 aa).

The C4-type zinc finger occupies 178–205; the sequence is CEDCGHEIYQEVTSRVFMPLFKCPSSRC. Residues 326–531 form the MCM domain; the sequence is IYNKLSRSLA…MDSDLELAKH (206 aa). 376 to 383 provides a ligand contact to ATP; sequence GDPGVAKS. The Arginine finger motif lies at 508 to 511; sequence SRFD.

This sequence belongs to the MCM family. In terms of assembly, component of the minichromosome maintenance (MCM) complex, a heterotetramer composed of MCM2, MCM3, MCM4, MCM5, MCM6 and MCM7. Interacts with ETG1. As to expression, expressed in shoot apex and flower buds.

It localises to the nucleus. It is found in the cytoplasm. The catalysed reaction is ATP + H2O = ADP + phosphate + H(+). In terms of biological role, probable component of the MCM2-7 complex (MCM complex) that may function as a DNA helicase and which is essential to undergo a single round of replication initiation and elongation per cell cycle in eukaryotic cells. Required for megagametophyte and embryo development. The chain is DNA replication licensing factor MCM7 (MCM7) from Arabidopsis thaliana (Mouse-ear cress).